Here is a 184-residue protein sequence, read N- to C-terminus: Lactoylglutathione lyase (184 aa).

The residue at position 2 (alanine 2) is an N-acetylalanine. Cysteine 19 and cysteine 20 are disulfide-bonded. Residues 31-177 (LLQQTMLRIK…DGYWIEILNP (147 aa)) form the VOC domain. Substrate is bound by residues glutamine 34 and arginine 38. Glutamine 34 provides a ligand contact to Zn(2+). Glutamate 100 lines the Zn(2+) pocket. Asparagine 104 provides a ligand contact to substrate. The residue at position 107 (threonine 107) is a Phosphothreonine. The substrate site is built by arginine 123 and histidine 127. Position 127 (histidine 127) interacts with Zn(2+). S-glutathionyl cysteine is present on cysteine 139. N6-acetyllysine; alternate is present on lysine 148. Lysine 148 carries the N6-succinyllysine; alternate modification. 157-158 (KM) contributes to the substrate binding site. Residue glutamate 173 coordinates Zn(2+). Catalysis depends on glutamate 173, which acts as the Proton donor/acceptor.

Belongs to the glyoxalase I family. Homodimer. Zn(2+) is required as a cofactor. In terms of processing, glutathionylation at Cys-139 inhibits enzyme activity. Post-translationally, phosphorylated at Thr-107 in the presence of CaMK2. However, this is a consensus site for phosphorylation by CK2 so phosphorylation may be mediated by CK2 rather than CaMK2. Phosphorylation is induced by TNF and suppresses the TNF-induced transcriptional activity of NF-kappa-B. Exists in a nitric oxide (NO)-modified form. The exact nature of the modification is unknown, but it suppresses the TNF-induced transcriptional activity of NF-kappa-B.

The enzyme catalyses (R)-S-lactoylglutathione = methylglyoxal + glutathione. It functions in the pathway secondary metabolite metabolism; methylglyoxal degradation; (R)-lactate from methylglyoxal: step 1/2. Catalyzes the conversion of hemimercaptal, formed from methylglyoxal and glutathione, to S-lactoylglutathione. Involved in the regulation of TNF-induced transcriptional activity of NF-kappa-B. Required for normal osteoclastogenesis. The polypeptide is Lactoylglutathione lyase (Glo1) (Rattus norvegicus (Rat)).